The chain runs to 571 residues: Isocitrate dehydrogenase kinase/phosphatase (571 aa).

Residues 318–324 (APGVRGM) and Lys339 contribute to the ATP site. Asp374 is an active-site residue.

Belongs to the AceK family.

It localises to the cytoplasm. It carries out the reaction L-seryl-[isocitrate dehydrogenase] + ATP = O-phospho-L-seryl-[isocitrate dehydrogenase] + ADP + H(+). Bifunctional enzyme which can phosphorylate or dephosphorylate isocitrate dehydrogenase (IDH) on a specific serine residue. This is a regulatory mechanism which enables bacteria to bypass the Krebs cycle via the glyoxylate shunt in response to the source of carbon. When bacteria are grown on glucose, IDH is fully active and unphosphorylated, but when grown on acetate or ethanol, the activity of IDH declines drastically concomitant with its phosphorylation. The protein is Isocitrate dehydrogenase kinase/phosphatase of Pseudomonas putida (strain ATCC 700007 / DSM 6899 / JCM 31910 / BCRC 17059 / LMG 24140 / F1).